Reading from the N-terminus, the 404-residue chain is Phosphoglycerate kinase (404 aa).

Residues 22 to 24, arginine 37, 60 to 63, arginine 119, and arginine 156 each bind substrate; these read DLN and HLGR. ATP contacts are provided by residues lysine 206, glycine 302, glutamate 333, and 359-362; that span reads GGDS.

Belongs to the phosphoglycerate kinase family. Monomer.

The protein localises to the cytoplasm. The catalysed reaction is (2R)-3-phosphoglycerate + ATP = (2R)-3-phospho-glyceroyl phosphate + ADP. The protein operates within carbohydrate degradation; glycolysis; pyruvate from D-glyceraldehyde 3-phosphate: step 2/5. The sequence is that of Phosphoglycerate kinase from Clavibacter michiganensis subsp. michiganensis (strain NCPPB 382).